The sequence spans 73 residues: Translation initiation factor IF-1 (73 aa).

The region spanning 1–73 is the S1-like domain; it reads MSKKKDVIEM…TRGRITYRYK (73 aa).

It belongs to the IF-1 family. Component of the 30S ribosomal translation pre-initiation complex which assembles on the 30S ribosome in the order IF-2 and IF-3, IF-1 and N-formylmethionyl-tRNA(fMet); mRNA recruitment can occur at any time during PIC assembly.

The protein resides in the cytoplasm. Functionally, one of the essential components for the initiation of protein synthesis. Stabilizes the binding of IF-2 and IF-3 on the 30S subunit to which N-formylmethionyl-tRNA(fMet) subsequently binds. Helps modulate mRNA selection, yielding the 30S pre-initiation complex (PIC). Upon addition of the 50S ribosomal subunit IF-1, IF-2 and IF-3 are released leaving the mature 70S translation initiation complex. In Roseiflexus castenholzii (strain DSM 13941 / HLO8), this protein is Translation initiation factor IF-1.